The chain runs to 209 residues: Small ribosomal subunit protein uS4 (209 aa).

Residues Ser-23 to Asp-46 form a disordered region. The 64-residue stretch at Cys-93–Leu-156 folds into the S4 RNA-binding domain.

The protein belongs to the universal ribosomal protein uS4 family. Part of the 30S ribosomal subunit. Contacts protein S5. The interaction surface between S4 and S5 is involved in control of translational fidelity.

In terms of biological role, one of the primary rRNA binding proteins, it binds directly to 16S rRNA where it nucleates assembly of the body of the 30S subunit. Functionally, with S5 and S12 plays an important role in translational accuracy. In Chlamydia caviae (strain ATCC VR-813 / DSM 19441 / 03DC25 / GPIC) (Chlamydophila caviae), this protein is Small ribosomal subunit protein uS4.